A 598-amino-acid polypeptide reads, in one-letter code: MYSISLVVNMQCISAYGSILSLPLRSNLFSVRKLSSFPHKSFSGQHGKLVRMKATPTRACHDQESNRKFKRLPLSKWGHHFLSAQVDVSEMNALAQEIERLKPEVGEMLMFSSKSIESTKKRILFIYMLVSLGVAFHFEDEIEQSLEEGFEKIQEMIAGEDDLYTISIMFWVFRTYGYNMSTDVFKRFKGENEKFMESITSDVKGMVSLYEAAHLRTTREDILEEALSFTTRNLESLARAGASSPHILMRIRNALCMPQHYNAEMIFAREYISFYEQEEDHNKMLLRFAKINFKFLQLNWIQELKTLTKWWKQQDLASKLPPYFRDRLIECYLFAIMIYFEPQFSLGRVSLAKINTVFTLVDDTCDRYGNVSEVAALVQCVERWDPDCMDSLPDYMKTVFKFAWNTFEECENAGIMEEGLSYDVQGALEEWEQGDVVPTFDEYLEIGGVEVTMYVSIACSFLGLGQSSREQAYKWLKSRPKFVEAQAKRARLMNDIAGFEGDMSRGFDVNAIMYYMKQYKVTEEETFTRLQKMARDLDTTVNEEILKTTKSVPRQILKRAIDFGKMIEFTYRSGEEYTHPEGRFKDHITSLFVDLIRL.

Mg(2+)-binding residues include D362, D366, N494, and D502. The DDXXD motif signature appears at 362 to 366; the sequence is DDTCD.

This sequence belongs to the terpene synthase family. Tpsa subfamily. Mg(2+) serves as cofactor. Requires Mn(2+) as cofactor. Expressed exclusively in siliques.

Its subcellular location is the cytoplasm. It participates in secondary metabolite biosynthesis; terpenoid biosynthesis. This is Terpenoid synthase 1 (TPS01) from Arabidopsis thaliana (Mouse-ear cress).